A 332-amino-acid polypeptide reads, in one-letter code: Glycerol-3-phosphate dehydrogenase [NAD(P)+] (332 aa).

NADPH-binding residues include S11, W12, K32, and K106. Positions 106, 137, and 139 each coordinate sn-glycerol 3-phosphate. A141 lines the NADPH pocket. Sn-glycerol 3-phosphate-binding residues include K192, D245, S255, R256, and N257. The active-site Proton acceptor is the K192. R256 lines the NADPH pocket. NADPH-binding residues include V280 and E282.

The protein belongs to the NAD-dependent glycerol-3-phosphate dehydrogenase family.

The protein resides in the cytoplasm. The enzyme catalyses sn-glycerol 3-phosphate + NAD(+) = dihydroxyacetone phosphate + NADH + H(+). It carries out the reaction sn-glycerol 3-phosphate + NADP(+) = dihydroxyacetone phosphate + NADPH + H(+). The protein operates within membrane lipid metabolism; glycerophospholipid metabolism. In terms of biological role, catalyzes the reduction of the glycolytic intermediate dihydroxyacetone phosphate (DHAP) to sn-glycerol 3-phosphate (G3P), the key precursor for phospholipid synthesis. The sequence is that of Glycerol-3-phosphate dehydrogenase [NAD(P)+] from Macrococcus caseolyticus (strain JCSC5402) (Macrococcoides caseolyticum).